Consider the following 233-residue polypeptide: Zein-alpha PMS2 (233 aa).

The first 21 residues, 1-21, serve as a signal peptide directing secretion; it reads MAAKIFCFLMLLGLSASVATA.

It belongs to the zein family.

In terms of biological role, zeins are major seed storage proteins. This Zea mays (Maize) protein is Zein-alpha PMS2 (ZMPMS2).